Reading from the N-terminus, the 146-residue chain is VHWTEKERTIITGIFSHMDYEDIGPKALSRCLIVYPWTQRHFSCFGNLYNAEAIMGNANVAAHGIKVLHGLDRGVKNMDNIVATYAELSILHSEKLHVDPDNFKLLSDCITIVVAAKMGHAFTGETQAAFQKFLAVVVSALGKQYH.

The 145-residue stretch at 2–146 folds into the Globin domain; sequence HWTEKERTII…VVSALGKQYH (145 aa). Positions 63 and 92 each coordinate heme b.

This sequence belongs to the globin family. As to quaternary structure, hb1 is a heterotetramer of two alpha chains and two beta-1 chains. As to expression, red blood cells.

Its function is as follows. Involved in oxygen transport from gills to the various peripheral tissues. This is Hemoglobin subunit beta-1 from Dissostichus eleginoides (Patagonian toothfish).